Reading from the N-terminus, the 539-residue chain is Glutamyl-tRNA(Gln) amidotransferase subunit A, mitochondrial (539 aa).

Active-site charge relay system residues include Lys-94 and Ser-181. Ser-205 serves as the catalytic Acyl-ester intermediate.

It belongs to the amidase family. GatA subfamily. Subunit of the heterotrimeric GatCAB amidotransferase (AdT) complex, composed of A, B and C subunits.

The protein resides in the mitochondrion. It carries out the reaction L-glutamyl-tRNA(Gln) + L-glutamine + ATP + H2O = L-glutaminyl-tRNA(Gln) + L-glutamate + ADP + phosphate + H(+). Functionally, allows the formation of correctly charged Gln-tRNA(Gln) through the transamidation of misacylated Glu-tRNA(Gln) in the mitochondria. The reaction takes place in the presence of glutamine and ATP through an activated gamma-phospho-Glu-tRNA(Gln). The polypeptide is Glutamyl-tRNA(Gln) amidotransferase subunit A, mitochondrial (Mycosarcoma maydis (Corn smut fungus)).